A 390-amino-acid chain; its full sequence is uncharacterized protein (390 aa).

The Glutaredoxin domain maps to 215-325; the sequence is SRFKRKTLGK…KLIKDCEMVE (111 aa).

This is an uncharacterized protein from Arabidopsis thaliana (Mouse-ear cress).